The following is a 189-amino-acid chain: Phosphoheptose isomerase (189 aa).

Residues 34–189 (LVEAFRKGNK…CDLVEKALFA (156 aa)) enclose the SIS domain. Position 49–51 (49–51 (NGG)) interacts with substrate. Zn(2+)-binding residues include H58 and E62. Substrate is bound by residues E62, 91–92 (ND), 117–119 (STS), S122, and Q169. Zn(2+) is bound by residues Q169 and H177.

Belongs to the SIS family. GmhA subfamily. As to quaternary structure, homotetramer. Zn(2+) is required as a cofactor.

It is found in the cytoplasm. The enzyme catalyses 2 D-sedoheptulose 7-phosphate = D-glycero-alpha-D-manno-heptose 7-phosphate + D-glycero-beta-D-manno-heptose 7-phosphate. It participates in carbohydrate biosynthesis; D-glycero-D-manno-heptose 7-phosphate biosynthesis; D-glycero-alpha-D-manno-heptose 7-phosphate and D-glycero-beta-D-manno-heptose 7-phosphate from sedoheptulose 7-phosphate: step 1/1. Catalyzes the isomerization of sedoheptulose 7-phosphate in D-glycero-D-manno-heptose 7-phosphate. The polypeptide is Phosphoheptose isomerase (Pelobacter propionicus (strain DSM 2379 / NBRC 103807 / OttBd1)).